Consider the following 527-residue polypeptide: Probable protein kinase UbiB (527 aa).

Residues 23-43 traverse the membrane as a helical segment; sequence ELLLELPLPFWLRALSWLLPW. In terms of domain architecture, Protein kinase spans 125–488; the sequence is RFDSQPLASA…ESDARDQWPL (364 aa). ATP contacts are provided by residues 131–139 and Lys-153; that span reads LASASVAQV. Residue Asp-288 is the Proton acceptor of the active site. The helical transmembrane segment at 504 to 524 threads the bilayer; the sequence is LAPLLATWPAWLMVGGGLYLV.

This sequence belongs to the ABC1 family. UbiB subfamily.

Its subcellular location is the cell inner membrane. The protein operates within cofactor biosynthesis; ubiquinone biosynthesis [regulation]. Is probably a protein kinase regulator of UbiI activity which is involved in aerobic coenzyme Q (ubiquinone) biosynthesis. The protein is Probable protein kinase UbiB of Ectopseudomonas mendocina (strain ymp) (Pseudomonas mendocina).